The following is a 206-amino-acid chain: Outer-membrane lipoprotein carrier protein (206 aa).

The signal sequence occupies residues 1-21; the sequence is MKKLLCAVLLSPLLYSNAVLA.

Belongs to the LolA family. In terms of assembly, monomer.

The protein localises to the periplasm. Functionally, participates in the translocation of lipoproteins from the inner membrane to the outer membrane. Only forms a complex with a lipoprotein if the residue after the N-terminal Cys is not an aspartate (The Asp acts as a targeting signal to indicate that the lipoprotein should stay in the inner membrane). The chain is Outer-membrane lipoprotein carrier protein from Shewanella sp. (strain MR-4).